A 190-amino-acid polypeptide reads, in one-letter code: Thymidylate kinase (190 aa).

7 to 14 contacts ATP; it reads GVDTCGKS.

Belongs to the thymidylate kinase family.

The enzyme catalyses dTMP + ATP = dTDP + ADP. Its function is as follows. Phosphorylation of dTMP to form dTDP in both de novo and salvage pathways of dTTP synthesis. The sequence is that of Thymidylate kinase from Wolinella succinogenes (strain ATCC 29543 / DSM 1740 / CCUG 13145 / JCM 31913 / LMG 7466 / NCTC 11488 / FDC 602W) (Vibrio succinogenes).